The chain runs to 798 residues: Pentatricopeptide repeat-containing protein At5g67570, chloroplastic (798 aa).

2 disordered regions span residues 1–21 (MDAS…EFEP) and 50–73 (IQKH…EAQK). PPR repeat units follow at residues 254–284 (SRFV…MLGD), 290–324 (DMAA…PTKL), 340–374 (DLVV…GLRP), 375–409 (NGAT…GEAP), 410–444 (KAIT…GVIG), 445–480 (TGSV…NCRP), 481–511 (LEIT…MKDK), 515–545 (NIGT…IVSR), 553–587 (NEYT…GYQM), and 588–622 (DQTK…GEIP).

Belongs to the PPR family. P subfamily. As to quaternary structure, interacts (via C-terminus) with SIGF (via N-terminus).

The protein localises to the plastid. Its subcellular location is the chloroplast. Its function is as follows. Involved in the regulation of early chloroplast development and chloroplast gene expression in a SIGF-dependent manner. The polypeptide is Pentatricopeptide repeat-containing protein At5g67570, chloroplastic (DG1) (Arabidopsis thaliana (Mouse-ear cress)).